A 179-amino-acid polypeptide reads, in one-letter code: Large ribosomal subunit protein uL5 (179 aa).

This sequence belongs to the universal ribosomal protein uL5 family. Part of the 50S ribosomal subunit; part of the 5S rRNA/L5/L18/L25 subcomplex. Contacts the 5S rRNA and the P site tRNA. Forms a bridge to the 30S subunit in the 70S ribosome.

Its function is as follows. This is one of the proteins that bind and probably mediate the attachment of the 5S RNA into the large ribosomal subunit, where it forms part of the central protuberance. In the 70S ribosome it contacts protein S13 of the 30S subunit (bridge B1b), connecting the 2 subunits; this bridge is implicated in subunit movement. Contacts the P site tRNA; the 5S rRNA and some of its associated proteins might help stabilize positioning of ribosome-bound tRNAs. This Rickettsia peacockii (strain Rustic) protein is Large ribosomal subunit protein uL5.